A 102-amino-acid polypeptide reads, in one-letter code: Small ribosomal subunit protein uS14 (102 aa).

It belongs to the universal ribosomal protein uS14 family. As to quaternary structure, part of the 30S ribosomal subunit. Contacts proteins S3 and S10.

Binds 16S rRNA, required for the assembly of 30S particles and may also be responsible for determining the conformation of the 16S rRNA at the A site. The protein is Small ribosomal subunit protein uS14 of Ehrlichia ruminantium (strain Gardel).